A 215-amino-acid polypeptide reads, in one-letter code: Thiamine import ATP-binding protein ThiQ (215 aa).

One can recognise an ABC transporter domain in the interval 2–215; it reads IYLNNVILND…GQISQLQKGV (214 aa). An ATP-binding site is contributed by 32–39; that stretch reads GESGAGKS.

This sequence belongs to the ABC transporter superfamily. Thiamine importer (TC 3.A.1.19.1) family. The complex is composed of two ATP-binding proteins (ThiQ), two transmembrane proteins (ThiP) and a solute-binding protein (ThiB).

The protein localises to the cell inner membrane. The enzyme catalyses thiamine(out) + ATP + H2O = thiamine(in) + ADP + phosphate + H(+). Part of the ABC transporter complex ThiBPQ involved in thiamine import. Responsible for energy coupling to the transport system. The sequence is that of Thiamine import ATP-binding protein ThiQ from Haemophilus influenzae (strain ATCC 51907 / DSM 11121 / KW20 / Rd).